A 61-amino-acid chain; its full sequence is Protein translocase subunit SecE (61 aa).

Residues 39-59 form a helical membrane-spanning segment; it reads VGIIIIGLIGFILSIVSQVLF.

It belongs to the SecE/SEC61-gamma family. Component of the Sec protein translocase complex. Heterotrimer consisting of SecY (alpha), SecG (beta) and SecE (gamma) subunits. The heterotrimers can form oligomers, although 1 heterotrimer is thought to be able to translocate proteins. Interacts with the ribosome. May interact with SecDF, and other proteins may be involved.

Its subcellular location is the cell membrane. In terms of biological role, essential subunit of the Sec protein translocation channel SecYEG. Clamps together the 2 halves of SecY. May contact the channel plug during translocation. This is Protein translocase subunit SecE from Methanosphaera stadtmanae (strain ATCC 43021 / DSM 3091 / JCM 11832 / MCB-3).